The following is a 526-amino-acid chain: MASNDYTQQATQSYGAYPTQPGQGYSQQSSQPYGQQSYSGYSQSTDTSGYGQSSYSSYGQSQNTGYGTQSTPQGYGSTGGYGSSQSSQSSYGQQSSYPGYGQQPAPSSTSGSYGSSSQSSSYGQPQSGSYSQQPSYGGQQQSYGQQQSYNPPQGYGQQNQYNSSSGGGGGGGGGGNYGQDQSSMSSGGGSGGGYGNQDQSGGGGSGGYGQQDRGGRGRGGSGGGGGGGGGGYNRSSGGYEPRGRGGGRGGRGGMGGSDRGGFNKFGGPRDQGSRHDSEQDNSDNNTIFVQGLGENVTIESVADYFKQIGIIKTNKKTGQPMINLYTDRETGKLKGEATVSFDDPPSAKAAIDWFDGKEFSGNPIKVSFATRRADFNRGGGNGRGGRGRGGPMGRGGYGGGGSGGGGRGGFPSGGGGGGGQQRAGDWKCPNPTCENMNFSWRNECNQCKAPKPDGPGGGPGGSHMGGNYGDDRRGGRGGYDRGGYRGRGGDRGGFRGGRGGGDRGGFGPGKMDSRGEHRQDRRERPY.

Residues 1–14 (MASNDYTQQATQSY) show a composition bias toward polar residues. The tract at residues 1–286 (MASNDYTQQA…SEQDNSDNNT (286 aa)) is disordered. Low complexity-rich tracts occupy residues 17–75 (YPTQ…PQGY) and 83–164 (SSQS…YNSS). 2 positions are modified to phosphoserine: Ser26 and Ser30. Ser42 carries the post-translational modification Phosphoserine; by ATM. Composition is skewed to gly residues over residues 165 to 177 (SGGGGGGGGGGNY) and 186 to 209 (SGGGSGGGYGNQDQSGGGGSGGYG). Residues Arg216 and Arg218 each carry the asymmetric dimethylarginine; alternate modification. An omega-N-methylarginine; alternate mark is found at Arg216 and Arg218. The segment covering 217–232 (GRGGSGGGGGGGGGGY) has biased composition (gly residues). At Ser221 the chain carries Phosphoserine. Asymmetric dimethylarginine occurs at positions 242, 244, 248, 251, and 259. The span at 244 to 259 (RGGGRGGRGGMGGSDR) shows a compositional bias: gly residues. A Phosphoserine modification is found at Ser277. Positions 285 to 371 (NTIFVQGLGE…NPIKVSFATR (87 aa)) constitute an RRM domain. Phosphothreonine is present on Thr286. Lys334 participates in a covalent cross-link: Glycyl lysine isopeptide (Lys-Gly) (interchain with G-Cter in SUMO2). Residue Ser340 is modified to Phosphoserine. Disordered stretches follow at residues 375-424 (FNRG…QRAG) and 444-526 (CNQC…ERPY). Arg377, Arg383, Arg386, Arg388, and Arg394 each carry asymmetric dimethylarginine. The span at 377–421 (RGGGNGRGGRGRGGPMGRGGYGGGGSGGGGRGGFPSGGGGGGGQQ) shows a compositional bias: gly residues. Arg407 is modified (asymmetric dimethylarginine; alternate). Position 407 is an omega-N-methylarginine; alternate (Arg407). The RanBP2-type zinc-finger motif lies at 422-453 (RAGDWKCPNPTCENMNFSWRNECNQCKAPKPD). The span at 454-468 (GPGGGPGGSHMGGNY) shows a compositional bias: gly residues. Residues 469 to 493 (GDDRRGGRGGYDRGGYRGRGGDRGG) are compositionally biased toward basic and acidic residues. Asymmetric dimethylarginine is present on residues Arg473, Arg476, Arg481, Arg485, Arg487, Arg491, Arg495, and Arg498. Positions 494-508 (FRGGRGGGDRGGFGP) are enriched in gly residues. Asymmetric dimethylarginine; alternate is present on Arg503. Residue Arg503 is modified to Omega-N-methylarginine; alternate. The segment covering 511 to 526 (MDSRGEHRQDRRERPY) has biased composition (basic and acidic residues).

This sequence belongs to the RRM TET family. Self-oligomerizes (via N-terminal region). Oligomerization is essential for chromatin binding. Component of nuclear riboprotein complexes. Interacts with ILF3, TDRD3 and SF1. Interacts through its C-terminus with SFRS13A. Interacts with OTUB1 and SARNP. Interacts with LRSAM1. Interacts with SAFB1 in a DNA-dependent manner; this interaction tethers FUS to chromatin. Interacts with MATR3. Interacts with SNRNP70 and POLR2A; these interactions couple RNA transcription and splicing. Interacts (through its RNA-binding domain) with RALY (through its RNA-binding domain); both are components of the same RNPs. In terms of processing, arg-216 and Arg-218 are dimethylated, probably to asymmetric dimethylarginine. Phosphorylated in its N-terminal serine residues upon induced DNA damage. ATM and DNA-PK are able to phosphorylate FUS N-terminal region. In terms of tissue distribution, ubiquitous.

The protein resides in the nucleus. Its function is as follows. DNA/RNA-binding protein that plays a role in various cellular processes such as transcription regulation, RNA splicing, RNA transport, DNA repair and damage response. Binds to ssRNA containing the consensus sequence 5'-AGGUAA-3'. Binds to nascent pre-mRNAs and acts as a molecular mediator between RNA polymerase II and U1 small nuclear ribonucleoprotein thereby coupling transcription and splicing. Also binds its own pre-mRNA and autoregulates its expression; this autoregulation mechanism is mediated by non-sense-mediated decay. Plays a role in DNA repair mechanisms by promoting D-loop formation and homologous recombination during DNA double-strand break repair. In neuronal cells, plays crucial roles in dendritic spine formation and stability, RNA transport, mRNA stability and synaptic homeostasis. This Homo sapiens (Human) protein is RNA-binding protein FUS (FUS).